We begin with the raw amino-acid sequence, 1235 residues long: DNA polymerase catalytic subunit (1235 aa).

2 disordered regions span residues glutamine 640–arginine 692 and alanine 1098–proline 1134. A compositionally biased stretch (basic and acidic residues) spans alanine 650–glutamate 661. Residues glutamate 662 to glutamate 675 are compositionally biased toward acidic residues. Residues glutamate 676–glycine 691 show a composition bias toward basic and acidic residues.

Belongs to the DNA polymerase type-B family. In terms of assembly, forms a complex with the ssDNA-binding protein UL29, the DNA polymerase processivity factor, and the alkaline exonuclease. Interacts with the putative helicase-primase complex subunit UL8; this interaction may coordinate leading and lagging strand DNA synthesis at the replication fork.

It is found in the host nucleus. The enzyme catalyses DNA(n) + a 2'-deoxyribonucleoside 5'-triphosphate = DNA(n+1) + diphosphate. It carries out the reaction Endonucleolytic cleavage to 5'-phosphomonoester.. In terms of biological role, replicates viral genomic DNA. The replication complex is composed of six viral proteins: the DNA polymerase, processivity factor, primase, primase-associated factor, helicase, and ssDNA-binding protein. Additionally, the polymerase contains an intrinsic ribonuclease H (RNase H) activity that specifically degrades RNA/DNA heteroduplexes or duplex DNA substrates in the 5' to 3' direction. Therefore, it can catalyze the excision of the RNA primers that initiate the synthesis of Okazaki fragments at a replication fork during viral DNA replication. In Human herpesvirus 1 (strain Angelotti) (HHV-1), this protein is DNA polymerase catalytic subunit.